The following is a 714-amino-acid chain: Calpain-1 catalytic subunit (714 aa).

The Calpain catalytic domain occupies 55–354; sequence LFRDEAFPPV…FTRLEICNLT (300 aa). Residues glutamine 109 and aspartate 114 each coordinate Ca(2+). Catalysis depends on residues cysteine 115, histidine 272, and asparagine 296. The Ca(2+) site is built by aspartate 318 and aspartate 323. At threonine 354 the chain carries Phosphothreonine. Residues 355–526 form a domain III region; that stretch reads PDALKSQRVR…KKAGTQELDD (172 aa). The interval 527–542 is linker; that stretch reads QVQAILPDEQVLSEEE. The domain IV stretch occupies residues 543–713; that stretch reads IDENFKALFR…LFKWLQLTMF (171 aa). EF-hand domains lie at 585–618, 615–650, and 680–714; these read FSLE…NRIR, NRIR…AGFK, and VRLE…TMFA. 10 residues coordinate Ca(2+): aspartate 598, aspartate 600, asparagine 602, lysine 604, glutamate 609, aspartate 628, aspartate 630, serine 632, serine 634, and glutamate 639.

It belongs to the peptidase C2 family. In terms of assembly, forms a heterodimer with a small (regulatory) subunit CAPNS1. Ca(2+) serves as cofactor. Post-translationally, undergoes calcium-induced successive autoproteolytic cleavages that generate a membrane-bound 78 kDa active form and an intracellular 75 kDa active form. Calpastatin reduces with high efficiency the transition from 78 kDa to 75 kDa calpain forms.

The protein resides in the cytoplasm. The protein localises to the cell membrane. It catalyses the reaction Broad endopeptidase specificity.. With respect to regulation, activated by micromolar concentrations of calcium and inhibited by calpastatin. Functionally, calcium-regulated non-lysosomal thiol-protease which catalyzes limited proteolysis of substrates involved in cytoskeletal remodeling and signal transduction. Proteolytically cleaves CTBP1. Cleaves and activates caspase-7 (CASP7). This is Calpain-1 catalytic subunit from Sus scrofa (Pig).